Reading from the N-terminus, the 318-residue chain is Acetyl-coenzyme A carboxylase carboxyl transferase subunit alpha (318 aa).

The 255-residue stretch at 38–292 (ALDRKAEEML…GEAIAAMLGE (255 aa)) folds into the CoA carboxyltransferase C-terminal domain.

This sequence belongs to the AccA family. Acetyl-CoA carboxylase is a heterohexamer composed of biotin carboxyl carrier protein (AccB), biotin carboxylase (AccC) and two subunits each of ACCase subunit alpha (AccA) and ACCase subunit beta (AccD).

The protein localises to the cytoplasm. The enzyme catalyses N(6)-carboxybiotinyl-L-lysyl-[protein] + acetyl-CoA = N(6)-biotinyl-L-lysyl-[protein] + malonyl-CoA. Its pathway is lipid metabolism; malonyl-CoA biosynthesis; malonyl-CoA from acetyl-CoA: step 1/1. Component of the acetyl coenzyme A carboxylase (ACC) complex. First, biotin carboxylase catalyzes the carboxylation of biotin on its carrier protein (BCCP) and then the CO(2) group is transferred by the carboxyltransferase to acetyl-CoA to form malonyl-CoA. The sequence is that of Acetyl-coenzyme A carboxylase carboxyl transferase subunit alpha from Paracoccus denitrificans (strain Pd 1222).